The chain runs to 429 residues: MKLYNLKNHNEQVNFEAAVKLGLGQQQGLFFPVELPTITPIELSKILKMDFITRSTEILSKFICHEISKEELYKHVKQAFSFKHPLKIKITKDIHCFELFHGPTLAFKDFGARFMAQMILLLNKKNESVTILTATSGDTGAAVANAFYGMKNVRVIILYPKGKISELQEKLFCTLGRNIKTISINGSFDDCQKLVKEAFNDKKLKESIGLNSANSINISRLLAQICYYFEAFSLISEEQRKNLVIAVPCGNFGNLTAGLLSKSLGLPIKSFIACTNANDTVPRFLNNGTWNPKKTVSTISNAMDISQPNNWTRIEELFYRKKWDLKKLRFGSVSDHTTEETLKELFKLGYVSEPHAAIAYRLLRDQLKENEFGLFLGTAHPAKFKNTVEKILKNKISLPSELQNRIDLPLLSHNINPVFSKLKTFLLEK.

N6-(pyridoxal phosphate)lysine is present on Lys108.

This sequence belongs to the threonine synthase family. Pyridoxal 5'-phosphate serves as cofactor.

The enzyme catalyses O-phospho-L-homoserine + H2O = L-threonine + phosphate. Its pathway is amino-acid biosynthesis; L-threonine biosynthesis; L-threonine from L-aspartate: step 5/5. In terms of biological role, catalyzes the gamma-elimination of phosphate from L-phosphohomoserine and the beta-addition of water to produce L-threonine. The protein is Threonine synthase (thrC) of Buchnera aphidicola subsp. Acyrthosiphon pisum (strain APS) (Acyrthosiphon pisum symbiotic bacterium).